A 690-amino-acid polypeptide reads, in one-letter code: Protein arginine N-methyltransferase 7 (690 aa).

2 SAM-dependent MTase PRMT-type domains span residues 14-357 and 366-690; these read QNSW…YSLW and TKSV…QKKL.

This sequence belongs to the class I-like SAM-binding methyltransferase superfamily. Protein arginine N-methyltransferase family. PRMT7 subfamily.

Its function is as follows. Essential arginine methyltransferase that can both catalyze the formation of omega-N monomethylarginine (MMA) and symmetrical dimethylarginine (sDMA). Specifically mediates the symmetrical dimethylation of arginine residues in the small nuclear ribonucleoproteins SmD1 and SmD3. The chain is Protein arginine N-methyltransferase 7 (Art7) from Drosophila sechellia (Fruit fly).